We begin with the raw amino-acid sequence, 335 residues long: V-set and immunoglobulin domain-containing protein 1 (335 aa).

The N-terminal stretch at 1-21 is a signal peptide; sequence MFPTMLKIFPILATLAGHVHG. Residues 22–136 enclose the Ig-like V-type domain; it reads VVVTVPEKTV…SQKSVIVNVL (115 aa). The Extracellular portion of the chain corresponds to 22-233; the sequence is VVVTVPEKTV…DLTSMHSDGN (212 aa). Intrachain disulfides connect C43/C115 and C160/C210. The Ig-like C2-type domain occupies 139-226; that stretch reads PSKPFCKIEG…GNSTCELDLT (88 aa). A helical membrane pass occupies residues 234–254; that stretch reads IVAGALIGAILAAVIICAIVW. The Cytoplasmic segment spans residues 255–335; it reads VLTKKAKKKK…QKEETAGSSF (81 aa). The disordered stretch occupies residues 266 to 335; it reads SSNEMQVMAQ…QKEETAGSSF (70 aa). Over residues 268 to 306 the composition is skewed to polar residues; the sequence is NEMQVMAQKQSNAEYAQVPNEENTPATAVLPSNATNEQP. The segment covering 319–335 has biased composition (basic and acidic residues); sequence NDEKHEVQKEETAGSSF.

In terms of tissue distribution, expressed in thymocytes.

The protein resides in the membrane. The chain is V-set and immunoglobulin domain-containing protein 1 (VSIG1) from Gallus gallus (Chicken).